Here is a 252-residue protein sequence, read N- to C-terminus: Biosynthetic peptidoglycan transglycosylase (252 aa).

The chain crosses the membrane as a helical span at residues 23-43; that stretch reads IGFLLGCIVAGVVAMQVYFFL.

This sequence belongs to the glycosyltransferase 51 family.

Its subcellular location is the cell inner membrane. The catalysed reaction is [GlcNAc-(1-&gt;4)-Mur2Ac(oyl-L-Ala-gamma-D-Glu-L-Lys-D-Ala-D-Ala)](n)-di-trans,octa-cis-undecaprenyl diphosphate + beta-D-GlcNAc-(1-&gt;4)-Mur2Ac(oyl-L-Ala-gamma-D-Glu-L-Lys-D-Ala-D-Ala)-di-trans,octa-cis-undecaprenyl diphosphate = [GlcNAc-(1-&gt;4)-Mur2Ac(oyl-L-Ala-gamma-D-Glu-L-Lys-D-Ala-D-Ala)](n+1)-di-trans,octa-cis-undecaprenyl diphosphate + di-trans,octa-cis-undecaprenyl diphosphate + H(+). Its pathway is cell wall biogenesis; peptidoglycan biosynthesis. Its function is as follows. Peptidoglycan polymerase that catalyzes glycan chain elongation from lipid-linked precursors. This Cupriavidus pinatubonensis (strain JMP 134 / LMG 1197) (Cupriavidus necator (strain JMP 134)) protein is Biosynthetic peptidoglycan transglycosylase.